The following is a 618-amino-acid chain: Dihydroxy-acid dehydratase (618 aa).

Position 81 (Asp-81) interacts with Mg(2+). Cys-122 is a binding site for [2Fe-2S] cluster. Positions 123 and 124 each coordinate Mg(2+). Lys-124 carries the N6-carboxylysine modification. [2Fe-2S] cluster is bound at residue Cys-195. Glu-493 provides a ligand contact to Mg(2+). The Proton acceptor role is filled by Ser-519.

The protein belongs to the IlvD/Edd family. In terms of assembly, homodimer. [2Fe-2S] cluster is required as a cofactor. It depends on Mg(2+) as a cofactor.

The enzyme catalyses (2R)-2,3-dihydroxy-3-methylbutanoate = 3-methyl-2-oxobutanoate + H2O. It catalyses the reaction (2R,3R)-2,3-dihydroxy-3-methylpentanoate = (S)-3-methyl-2-oxopentanoate + H2O. The protein operates within amino-acid biosynthesis; L-isoleucine biosynthesis; L-isoleucine from 2-oxobutanoate: step 3/4. Its pathway is amino-acid biosynthesis; L-valine biosynthesis; L-valine from pyruvate: step 3/4. Its function is as follows. Functions in the biosynthesis of branched-chain amino acids. Catalyzes the dehydration of (2R,3R)-2,3-dihydroxy-3-methylpentanoate (2,3-dihydroxy-3-methylvalerate) into 2-oxo-3-methylpentanoate (2-oxo-3-methylvalerate) and of (2R)-2,3-dihydroxy-3-methylbutanoate (2,3-dihydroxyisovalerate) into 2-oxo-3-methylbutanoate (2-oxoisovalerate), the penultimate precursor to L-isoleucine and L-valine, respectively. In Shewanella amazonensis (strain ATCC BAA-1098 / SB2B), this protein is Dihydroxy-acid dehydratase.